A 154-amino-acid chain; its full sequence is Large ribosomal subunit protein uL13 (154 aa).

It belongs to the universal ribosomal protein uL13 family. As to quaternary structure, part of the 50S ribosomal subunit.

This protein is one of the early assembly proteins of the 50S ribosomal subunit, although it is not seen to bind rRNA by itself. It is important during the early stages of 50S assembly. The protein is Large ribosomal subunit protein uL13 of Bradyrhizobium diazoefficiens (strain JCM 10833 / BCRC 13528 / IAM 13628 / NBRC 14792 / USDA 110).